The chain runs to 420 residues: Serine hydroxymethyltransferase (420 aa).

(6S)-5,6,7,8-tetrahydrofolate contacts are provided by residues Leu-121 and 125-127 (GHL). Lys-230 bears the N6-(pyridoxal phosphate)lysine mark. Residue 354–356 (SPF) participates in (6S)-5,6,7,8-tetrahydrofolate binding.

Belongs to the SHMT family. In terms of assembly, homodimer. Requires pyridoxal 5'-phosphate as cofactor.

Its subcellular location is the cytoplasm. The enzyme catalyses (6R)-5,10-methylene-5,6,7,8-tetrahydrofolate + glycine + H2O = (6S)-5,6,7,8-tetrahydrofolate + L-serine. It participates in one-carbon metabolism; tetrahydrofolate interconversion. Its pathway is amino-acid biosynthesis; glycine biosynthesis; glycine from L-serine: step 1/1. In terms of biological role, catalyzes the reversible interconversion of serine and glycine with tetrahydrofolate (THF) serving as the one-carbon carrier. This reaction serves as the major source of one-carbon groups required for the biosynthesis of purines, thymidylate, methionine, and other important biomolecules. Also exhibits THF-independent aldolase activity toward beta-hydroxyamino acids, producing glycine and aldehydes, via a retro-aldol mechanism. This Rickettsia africae (strain ESF-5) protein is Serine hydroxymethyltransferase.